Consider the following 260-residue polypeptide: Proliferating cell nuclear antigen (260 aa).

The DNA-binding element occupies 61-80 (RCDRNLAMGVNLSSMSKILK). Residue Lys164 forms a Glycyl lysine isopeptide (Lys-Gly) (interchain with G-Cter in ubiquitin) linkage.

It belongs to the PCNA family. Homotrimer. Forms a complex with activator 1 heteropentamer in the presence of ATP. Component of the replisome complex. Post-translationally, monoubiquitinated by the ube2b-rad18 complex on Lys-164. Monoubiquitination at Lys-164 also takes place in undamaged proliferating cells, and is mediated by the dcx(dtl) complex, leading to enhance PCNA-dependent translesion DNA synthesis.

It localises to the nucleus. Functionally, this protein is an auxiliary protein of DNA polymerase delta and is involved in the control of eukaryotic DNA replication by increasing the polymerase's processibility during elongation of the leading strand. This Haplochromis burtoni (Burton's mouthbrooder) protein is Proliferating cell nuclear antigen (pcna).